The chain runs to 230 residues: Lactate utilization protein C (230 aa).

Belongs to the LutC/YkgG family.

Is involved in L-lactate degradation and allows cells to grow with lactate as the sole carbon source. The chain is Lactate utilization protein C from Exiguobacterium sp. (strain ATCC BAA-1283 / AT1b).